Consider the following 346-residue polypeptide: Aspartate-semialdehyde dehydrogenase (346 aa).

Residues 13-16 (TGAV) and 41-42 (RS) contribute to the NADP(+) site. Phosphoserine is present on serine 98. Arginine 101 provides a ligand contact to phosphate. Cysteine 130 acts as the Acyl-thioester intermediate in catalysis. A Phosphotyrosine modification is found at tyrosine 146. Glutamine 157 is a binding site for substrate. 160 to 161 (SG) lines the NADP(+) pocket. Lysine 221 is a phosphate binding site. Arginine 243 is a substrate binding site. Residue histidine 250 is the Proton acceptor of the active site. Asparagine 324 provides a ligand contact to NADP(+).

Belongs to the aspartate-semialdehyde dehydrogenase family. Homodimer.

It catalyses the reaction L-aspartate 4-semialdehyde + phosphate + NADP(+) = 4-phospho-L-aspartate + NADPH + H(+). It functions in the pathway amino-acid biosynthesis; L-lysine biosynthesis via DAP pathway; (S)-tetrahydrodipicolinate from L-aspartate: step 2/4. The protein operates within amino-acid biosynthesis; L-methionine biosynthesis via de novo pathway; L-homoserine from L-aspartate: step 2/3. Its pathway is amino-acid biosynthesis; L-threonine biosynthesis; L-threonine from L-aspartate: step 2/5. Its function is as follows. Catalyzes the NADPH-dependent formation of L-aspartate-semialdehyde (L-ASA) by the reductive dephosphorylation of L-aspartyl-4-phosphate. The polypeptide is Aspartate-semialdehyde dehydrogenase (Bacillus subtilis (strain 168)).